Here is a 266-residue protein sequence, read N- to C-terminus: Movement protein (266 aa).

Basic residues predominate over residues 212-227; it reads KTKKGKKRKKEKKKRV. Residues 212–266 are disordered; that stretch reads KTKKGKKRKKEKKKRVVGNSVNNKKINNSGKKGLKVEEIEDNVSDDESIASSSTF. Over residues 228–242 the composition is skewed to low complexity; that stretch reads VGNSVNNKKINNSGK. A compositionally biased stretch (acidic residues) spans 249-259; the sequence is EIEDNVSDDES.

This sequence belongs to the tobamovirus movement protein family.

The protein resides in the host cytoplasm. It localises to the host cytoskeleton. The protein localises to the host cell junction. It is found in the host plasmodesma. In terms of biological role, transports viral genome to neighboring plant cells directly through plasmosdesmata, without any budding. The movement protein allows efficient cell to cell propagation, by bypassing the host cell wall barrier. Forms a ribonucleoprotein complex with viral RNA. Binds microtubules and modulates microtubule stability. Can bind double-stranded DNA. This Capsicum annuum (Capsicum pepper) protein is Movement protein (MP).